A 250-amino-acid polypeptide reads, in one-letter code: Zinc finger protein lsy-27 (250 aa).

2 consecutive C2H2-type zinc fingers follow at residues 25–48 (FVCS…QLMH) and 52–75 (HTCM…RNEH). Residues 81-104 (FTCGCCNWTFASKRQLTEHTKCIQ) form a C2H2-type 3; degenerate zinc finger. Disordered regions lie at residues 126–177 (IQST…EAER) and 226–250 (QKVK…QEIE). Low complexity predominate over residues 148-165 (SLSPSSSVSTSISSRDAS). Residues 239–250 (MIPEKHVKQEIE) are compositionally biased toward basic and acidic residues.

Its function is as follows. Involved in regulating left/right asymmetric differentiation of the gustatory ASE neurons. Plays a role in modulating expression of LIM/homeobox protein lim-6. This Caenorhabditis elegans protein is Zinc finger protein lsy-27.